A 340-amino-acid chain; its full sequence is Guanine nucleotide-binding protein subunit beta-1 (340 aa).

Serine 29 carries the post-translational modification Phosphoserine. WD repeat units follow at residues glycine 53–alanine 92, leucine 95–arginine 134, glycine 141–serine 179, glycine 182–threonine 221, glycine 224–methionine 263, asparagine 268–isoleucine 307, and glycine 310–asparagine 340.

This sequence belongs to the WD repeat G protein beta family. G proteins are composed of 3 units, alpha, beta and gamma. Expressed in the brain neuropil and cortex, and the thoracic ganglion (at protein level). Expression detected in eye at protein level but not at mRNA level, suggesting cross reactivity of antibodies to the similar Gbeta76C protein.

Guanine nucleotide-binding proteins (G proteins) are involved as a modulator or transducer in various transmembrane signaling systems. The beta and gamma chains are required for the GTPase activity, for replacement of GDP by GTP, and for G protein-effector interaction. This Drosophila melanogaster (Fruit fly) protein is Guanine nucleotide-binding protein subunit beta-1 (Gbeta13F).